We begin with the raw amino-acid sequence, 686 residues long: MKKNIKDIFKNFNIFWFCFIFLLLSLLYCLIMMEISHQHDNNKPSEIIAVLKEIKELQTKSTEESKKESKESKESKEDKTKIIKIKKFDIHETSNYGSYLIVFQWGTGNKDSFEWEKELKFPNVDQETYKEIMKICFEIIGTPIDKKDNITNLSQMITKIKEKTNLIPLQRIPYQPYFGFAPFISAVNICILIIIFYFIYNSIEKTSAQISGKNLNISRQKVLVNQQEFTFKDIAGADEEKEEMSELINFLKNPFKYEAMGARIPKGVLLYGPPGVGKTLLAKAVAGEAKVPFFAVSGSDFIEVYVGLGASRIRKLFNEAKQNAPCIIFIDEIETISHQRGSVNYSNSEHDQTLNQLLVEMDGFTKNIGVIVMAATNQPESLDLAVTRPGRFDRHFHITLPSVKDREAILKLHARNKKFNDDVDFESLAKQTPGFNGAQLEAILNESALLATRRNVLVICNEDISEALDRVLMGPSKKSKKYNDKEKRMVAYHESGHAVIGLKLPEADQIQKVTIIPRGNAGGYNLTLPQEETFFSSKKRLLAQITSFLGGRAAEEVVFQDVSNGAYSDFKYATEIAKKMVTQYGMSDLGPIQYMENNFYKNFSDSKAVEIDKEIQKIIDYCYQNAKKIITENRDLLDLISKYLLEIETITQKDLEEILNTGIIEWWEKDKLKKNLQKSEKEDCNK.

At 1-11 (MKKNIKDIFKN) the chain is on the cytoplasmic side. A helical transmembrane segment spans residues 12-32 (FNIFWFCFIFLLLSLLYCLIM). Residues 33 to 178 (MEISHQHDNN…LQRIPYQPYF (146 aa)) are Extracellular-facing. A helical transmembrane segment spans residues 179–199 (GFAPFISAVNICILIIIFYFI). Topologically, residues 200–686 (YNSIEKTSAQ…QKSEKEDCNK (487 aa)) are cytoplasmic. 272-279 (GPPGVGKT) provides a ligand contact to ATP. His493 serves as a coordination point for Zn(2+). Glu494 is a catalytic residue. His497 and Asp569 together coordinate Zn(2+).

This sequence in the central section; belongs to the AAA ATPase family. The protein in the C-terminal section; belongs to the peptidase M41 family. As to quaternary structure, homohexamer. Zn(2+) serves as cofactor.

It is found in the cell membrane. Acts as a processive, ATP-dependent zinc metallopeptidase for both cytoplasmic and membrane proteins. Plays a role in the quality control of integral membrane proteins. The sequence is that of ATP-dependent zinc metalloprotease FtsH 2 from Phytoplasma mali (strain AT).